We begin with the raw amino-acid sequence, 153 residues long: Aspartate carbamoyltransferase regulatory chain (153 aa).

The Zn(2+) site is built by cysteine 109, cysteine 114, cysteine 138, and cysteine 141.

Belongs to the PyrI family. Contains catalytic and regulatory chains. Zn(2+) serves as cofactor.

Functionally, involved in allosteric regulation of aspartate carbamoyltransferase. This chain is Aspartate carbamoyltransferase regulatory chain, found in Edwardsiella ictaluri (strain 93-146).